Here is a 552-residue protein sequence, read N- to C-terminus: Putative transport protein PBPRA2144 (552 aa).

Transmembrane regions (helical) follow at residues 4-24, 26-46, 65-85, 95-115, and 158-178; these read IALS…IGNW, ICGV…VGHF, FGLI…FFAS, AFAA…YKIF, and MGYA…MWIL. RCK C-terminal domains follow at residues 188-276 and 279-361; these read KEAE…VIGE and DASL…IVGN. The next 6 membrane-spanning stretches (helical) occupy residues 371–391, 394–414, 439–459, 464–484, 493–513, and 532–552; these read MLPV…PFYL, FPAA…LILA, IVLF…DTLV, LSWM…VGFL, YLTI…LAFA, and PLVM…LWAV.

The protein belongs to the AAE transporter (TC 2.A.81) family. YidE subfamily.

The protein localises to the cell membrane. The protein is Putative transport protein PBPRA2144 of Photobacterium profundum (strain SS9).